The primary structure comprises 254 residues: Pimeloyl-[acyl-carrier protein] methyl ester esterase (254 aa).

The 226-residue stretch at L16–E241 folds into the AB hydrolase-1 domain. Substrate contacts are provided by residues W22, S82–L83, and F143–Q147. The active-site Nucleophile is S82. Residues D207 and H235 contribute to the active site. H235 contacts substrate.

It belongs to the AB hydrolase superfamily. Carboxylesterase BioH family. As to quaternary structure, monomer.

Its subcellular location is the cytoplasm. The catalysed reaction is 6-carboxyhexanoyl-[ACP] methyl ester + H2O = 6-carboxyhexanoyl-[ACP] + methanol + H(+). It functions in the pathway cofactor biosynthesis; biotin biosynthesis. The physiological role of BioH is to remove the methyl group introduced by BioC when the pimeloyl moiety is complete. It allows to synthesize pimeloyl-ACP via the fatty acid synthetic pathway through the hydrolysis of the ester bonds of pimeloyl-ACP esters. This is Pimeloyl-[acyl-carrier protein] methyl ester esterase from Vibrio campbellii (strain ATCC BAA-1116).